Here is a 361-residue protein sequence, read N- to C-terminus: Alanine racemase (361 aa).

Lys34 serves as the catalytic Proton acceptor; specific for D-alanine. Lys34 is modified (N6-(pyridoxal phosphate)lysine). Arg129 serves as a coordination point for substrate. Tyr256 (proton acceptor; specific for L-alanine) is an active-site residue. Met304 is a binding site for substrate.

Belongs to the alanine racemase family. It depends on pyridoxal 5'-phosphate as a cofactor.

The catalysed reaction is L-alanine = D-alanine. It participates in amino-acid biosynthesis; D-alanine biosynthesis; D-alanine from L-alanine: step 1/1. In terms of biological role, catalyzes the interconversion of L-alanine and D-alanine. May also act on other amino acids. The polypeptide is Alanine racemase (alr) (Corynebacterium glutamicum (strain R)).